Reading from the N-terminus, the 617-residue chain is Proline--tRNA ligase (617 aa).

The protein belongs to the class-II aminoacyl-tRNA synthetase family. ProS type 1 subfamily. Homodimer.

The protein resides in the cytoplasm. It catalyses the reaction tRNA(Pro) + L-proline + ATP = L-prolyl-tRNA(Pro) + AMP + diphosphate. Functionally, catalyzes the attachment of proline to tRNA(Pro) in a two-step reaction: proline is first activated by ATP to form Pro-AMP and then transferred to the acceptor end of tRNA(Pro). As ProRS can inadvertently accommodate and process non-cognate amino acids such as alanine and cysteine, to avoid such errors it has two additional distinct editing activities against alanine. One activity is designated as 'pretransfer' editing and involves the tRNA(Pro)-independent hydrolysis of activated Ala-AMP. The other activity is designated 'posttransfer' editing and involves deacylation of mischarged Ala-tRNA(Pro). The misacylated Cys-tRNA(Pro) is not edited by ProRS. The protein is Proline--tRNA ligase of Streptococcus pneumoniae (strain ATCC 700669 / Spain 23F-1).